Reading from the N-terminus, the 496-residue chain is Iroquois-class homeodomain protein irx-4-A (496 aa).

The segment at residues 141-203 (GSSRRKNATR…NARRRLKKEN (63 aa)) is a DNA-binding region (homeobox; TALE-type). Positions 203–246 (NKMTWPPRNKCSDEKRPYDEEEEEEEEEEDSQKATIKNEKKTVD) are disordered. The segment covering 221–232 (DEEEEEEEEEED) has biased composition (acidic residues).

It belongs to the TALE/IRO homeobox family. Expressed in the neural plate in overlapping patterns with other irx members, which all share an anterior border of expression. At stage 20, expressed in a subset of cells in the developing hindbrain with expression appearing above the otic vesicle by stage 26. Expression in retina cells begins at stage 28, continuing at later stages and is limited to a subset of retinal cells of the optic cup. Also expressed in the ventricle of the heart from stage 36 (late tailbud) onwards. Only expressed in the pronephros at tadpole stage.

The protein localises to the nucleus. In terms of biological role, acts partially redundantly with other irx members in neural patterning. Required for formation of the posterior forebrain, midbrain, hindbrain, and to a lesser extent, spinal cord. Patterns the neuroectoderm in both the anterior/posterior and dorsal/ventral axes. Does not appear to play a role in pronephros kidney development. This is Iroquois-class homeodomain protein irx-4-A (irx4-a) from Xenopus laevis (African clawed frog).